The primary structure comprises 164 residues: Succinate dehydrogenase assembly factor 2, mitochondrial (164 aa).

Belongs to the SDHAF2 family. As to quaternary structure, interacts with the flavoprotein subunit within the SDH catalytic dimer.

It localises to the mitochondrion matrix. Functionally, plays an essential role in the assembly of succinate dehydrogenase (SDH), an enzyme complex (also referred to as respiratory complex II) that is a component of both the tricarboxylic acid (TCA) cycle and the mitochondrial electron transport chain, and which couples the oxidation of succinate to fumarate with the reduction of ubiquinone (coenzyme Q) to ubiquinol. Required for flavinylation (covalent attachment of FAD) of the flavoprotein subunit of the SDH catalytic dimer. The polypeptide is Succinate dehydrogenase assembly factor 2, mitochondrial (Lodderomyces elongisporus (strain ATCC 11503 / CBS 2605 / JCM 1781 / NBRC 1676 / NRRL YB-4239) (Yeast)).